The sequence spans 172 residues: MSLDLTQFVRNIPDFPIPGVQFKDITPLLGNAQAFDAAIEHFAQRYANQQLQAIVGIESRGFIFGAPLALRLGIGFVPIRKPGKLPAQTIGVDYSLEYGTNRLEIHNDALQAGDRVVVVDDLLATGGTVVAACDLLNQLGAEVVEAAFLIELTFLGGREKLGNRPFYAQIQY.

Belongs to the purine/pyrimidine phosphoribosyltransferase family. Homodimer.

Its subcellular location is the cytoplasm. The catalysed reaction is AMP + diphosphate = 5-phospho-alpha-D-ribose 1-diphosphate + adenine. Its pathway is purine metabolism; AMP biosynthesis via salvage pathway; AMP from adenine: step 1/1. Functionally, catalyzes a salvage reaction resulting in the formation of AMP, that is energically less costly than de novo synthesis. This is Adenine phosphoribosyltransferase from Herpetosiphon aurantiacus (strain ATCC 23779 / DSM 785 / 114-95).